Reading from the N-terminus, the 43-residue chain is Hainantoxin F5-22.36 (43 aa).

Cystine bridges form between Cys1–Cys19, Cys8–Cys24, and Cys18–Cys38.

It belongs to the neurotoxin 14 (magi-1) family. 02 (HWTX-XVIc) subfamily. Expressed by the venom gland.

The protein localises to the secreted. Its function is as follows. Probable ion channel inhibitor. This is Hainantoxin F5-22.36 from Cyriopagopus hainanus (Chinese bird spider).